We begin with the raw amino-acid sequence, 338 residues long: Ketol-acid reductoisomerase (NADP(+)) (338 aa).

The 181-residue stretch at 1–181 (MQVYYDKDAD…GGGRAGVIET (181 aa)) folds into the KARI N-terminal Rossmann domain. Residues 24–27 (YGSQ), arginine 47, serine 50, serine 52, and 82–85 (DEHQ) contribute to the NADP(+) site. Histidine 107 is an active-site residue. Glycine 133 lines the NADP(+) pocket. A KARI C-terminal knotted domain is found at 182-327 (SFKDETETDL…AKLRDMMPWI (146 aa)). Mg(2+) contacts are provided by aspartate 190, glutamate 194, glutamate 226, and glutamate 230. Serine 251 is a binding site for substrate.

It belongs to the ketol-acid reductoisomerase family. The cofactor is Mg(2+).

It carries out the reaction (2R)-2,3-dihydroxy-3-methylbutanoate + NADP(+) = (2S)-2-acetolactate + NADPH + H(+). It catalyses the reaction (2R,3R)-2,3-dihydroxy-3-methylpentanoate + NADP(+) = (S)-2-ethyl-2-hydroxy-3-oxobutanoate + NADPH + H(+). The protein operates within amino-acid biosynthesis; L-isoleucine biosynthesis; L-isoleucine from 2-oxobutanoate: step 2/4. It participates in amino-acid biosynthesis; L-valine biosynthesis; L-valine from pyruvate: step 2/4. Involved in the biosynthesis of branched-chain amino acids (BCAA). Catalyzes an alkyl-migration followed by a ketol-acid reduction of (S)-2-acetolactate (S2AL) to yield (R)-2,3-dihydroxy-isovalerate. In the isomerase reaction, S2AL is rearranged via a Mg-dependent methyl migration to produce 3-hydroxy-3-methyl-2-ketobutyrate (HMKB). In the reductase reaction, this 2-ketoacid undergoes a metal-dependent reduction by NADPH to yield (R)-2,3-dihydroxy-isovalerate. The sequence is that of Ketol-acid reductoisomerase (NADP(+)) from Thioalkalivibrio sulfidiphilus (strain HL-EbGR7).